A 102-amino-acid chain; its full sequence is Small ribosomal subunit protein uS10 (102 aa).

This sequence belongs to the universal ribosomal protein uS10 family. Part of the 30S ribosomal subunit.

Functionally, involved in the binding of tRNA to the ribosomes. The chain is Small ribosomal subunit protein uS10 from Thermosipho africanus (strain TCF52B).